Consider the following 196-residue polypeptide: Large ribosomal subunit protein uL10 (196 aa).

Residues 167 to 196 (EKKAAEGPAEAPQPATEPPAEAPEAPADAE) are disordered.

It belongs to the universal ribosomal protein uL10 family. As to quaternary structure, part of the ribosomal stalk of the 50S ribosomal subunit. The N-terminus interacts with L11 and the large rRNA to form the base of the stalk. The C-terminus forms an elongated spine to which L12 dimers bind in a sequential fashion forming a multimeric L10(L12)X complex.

Forms part of the ribosomal stalk, playing a central role in the interaction of the ribosome with GTP-bound translation factors. In Mycolicibacterium paratuberculosis (strain ATCC BAA-968 / K-10) (Mycobacterium paratuberculosis), this protein is Large ribosomal subunit protein uL10.